The sequence spans 483 residues: Regulatory protein ViaA (483 aa).

This sequence belongs to the ViaA family. Homodimer. Interacts with RavA.

The protein resides in the cytoplasm. In terms of biological role, component of the RavA-ViaA chaperone complex, which may act on the membrane to optimize the function of some of the respiratory chains. ViaA stimulates the ATPase activity of RavA. The protein is Regulatory protein ViaA of Salmonella dublin (strain CT_02021853).